The primary structure comprises 190 residues: Probable RNA-binding protein 18 (190 aa).

The region spanning 25–106 (HRLWIGNLDP…KKLVVRWAHA (82 aa)) is the RRM domain. Positions 166 to 190 (VYSYFKPPDKKRTTPYSRTAWKSRR) are disordered.

The polypeptide is Probable RNA-binding protein 18 (Rbm18) (Mus musculus (Mouse)).